Consider the following 76-residue polypeptide: DNA-directed RNA polymerase subunit epsilon (76 aa).

This sequence belongs to the RNA polymerase subunit epsilon family. As to quaternary structure, RNAP is composed of a core of 2 alpha, a beta and a beta' subunit. The core is associated with a delta subunit, and at least one of epsilon or omega. When a sigma factor is associated with the core the holoenzyme is formed, which can initiate transcription.

The enzyme catalyses RNA(n) + a ribonucleoside 5'-triphosphate = RNA(n+1) + diphosphate. Its function is as follows. A non-essential component of RNA polymerase (RNAP). The sequence is that of DNA-directed RNA polymerase subunit epsilon from Streptococcus equi subsp. equi (strain 4047).